We begin with the raw amino-acid sequence, 263 residues long: Tropinone reductase homolog At2g29300 (263 aa).

An NADP(+)-binding site is contributed by 13–37; sequence LVTGAASGIGYAIVEELAGFGARIH. Ser-146 is a substrate binding site. The Proton acceptor role is filled by Tyr-160.

This sequence belongs to the short-chain dehydrogenases/reductases (SDR) family. SDR65C subfamily.

The sequence is that of Tropinone reductase homolog At2g29300 from Arabidopsis thaliana (Mouse-ear cress).